The following is a 137-amino-acid chain: Ribosomal RNA small subunit methyltransferase G (137 aa).

S-adenosyl-L-methionine is bound by residues Gly75, Phe80, and 126–127 (AE).

It belongs to the methyltransferase superfamily. RNA methyltransferase RsmG family.

It localises to the cytoplasm. Its function is as follows. Specifically methylates the N7 position of a guanine in 16S rRNA. The sequence is that of Ribosomal RNA small subunit methyltransferase G from Mycoplasma mycoides subsp. mycoides SC (strain CCUG 32753 / NCTC 10114 / PG1).